We begin with the raw amino-acid sequence, 242 residues long: Small ribosomal subunit protein uS2 (242 aa).

The protein belongs to the universal ribosomal protein uS2 family.

In Shewanella piezotolerans (strain WP3 / JCM 13877), this protein is Small ribosomal subunit protein uS2.